The primary structure comprises 234 residues: 2,3,4,5-tetrahydropyridine-2,6-dicarboxylate N-acetyltransferase (234 aa).

It belongs to the transferase hexapeptide repeat family. DapH subfamily.

The enzyme catalyses (S)-2,3,4,5-tetrahydrodipicolinate + acetyl-CoA + H2O = L-2-acetamido-6-oxoheptanedioate + CoA. The protein operates within amino-acid biosynthesis; L-lysine biosynthesis via DAP pathway; LL-2,6-diaminopimelate from (S)-tetrahydrodipicolinate (acetylase route): step 1/3. Catalyzes the transfer of an acetyl group from acetyl-CoA to tetrahydrodipicolinate. This chain is 2,3,4,5-tetrahydropyridine-2,6-dicarboxylate N-acetyltransferase, found in Ligilactobacillus salivarius (strain UCC118) (Lactobacillus salivarius).